We begin with the raw amino-acid sequence, 444 residues long: Phosphoglucosamine mutase (444 aa).

The active-site Phosphoserine intermediate is serine 102. Residues serine 102, aspartate 241, aspartate 243, and aspartate 245 each contribute to the Mg(2+) site. Serine 102 is modified (phosphoserine).

It belongs to the phosphohexose mutase family. Mg(2+) serves as cofactor. In terms of processing, activated by phosphorylation.

It carries out the reaction alpha-D-glucosamine 1-phosphate = D-glucosamine 6-phosphate. Functionally, catalyzes the conversion of glucosamine-6-phosphate to glucosamine-1-phosphate. The sequence is that of Phosphoglucosamine mutase from Glaesserella parasuis serovar 5 (strain SH0165) (Haemophilus parasuis).